We begin with the raw amino-acid sequence, 434 residues long: Tol-Pal system protein TolB (434 aa).

Positions 1–24 (MKFSAYLTTLFIVLFSLFIQTVQA) are cleaved as a signal peptide.

The protein belongs to the TolB family. In terms of assembly, the Tol-Pal system is composed of five core proteins: the inner membrane proteins TolA, TolQ and TolR, the periplasmic protein TolB and the outer membrane protein Pal. They form a network linking the inner and outer membranes and the peptidoglycan layer.

It localises to the periplasm. In terms of biological role, part of the Tol-Pal system, which plays a role in outer membrane invagination during cell division and is important for maintaining outer membrane integrity. This Histophilus somni (strain 129Pt) (Haemophilus somnus) protein is Tol-Pal system protein TolB.